The following is a 483-amino-acid chain: NAD-dependent protein deacetylase SRT1 (483 aa).

In terms of domain architecture, Deacetylase sirtuin-type spans 27-270 (PELLHKKIEE…MYMMNLRIPP (244 aa)). Residues 53-57 (AGIST), 63-65 (DFR), and 114-117 (QNVD) each bind NAD(+). His-134 acts as the Proton acceptor in catalysis. Positions 142, 145, 167, and 172 each coordinate Zn(2+). NAD(+) is bound by residues 209–211 (GTS) and 235–237 (NLQ).

It belongs to the sirtuin family. Class IV subfamily. The cofactor is Zn(2+).

It localises to the nucleus. The enzyme catalyses N(6)-acetyl-L-lysyl-[protein] + NAD(+) + H2O = 2''-O-acetyl-ADP-D-ribose + nicotinamide + L-lysyl-[protein]. Functionally, NAD-dependent protein deacetylase. Has deacetylase activity towards H3K9Ac. May have a function in the safeguard against genome instability and DNA damage to ensure plant cell growth. May negatively regulate metabolic signal transduction involving methanol and jasmonates during leaf senescence. Required for histone H3K9Ac deacetylation and repression of AP2-1/RSR1 and amylase genes during early seed development. Functions as an epigenetic regulator to repress the expression of glycolytic genes and glycolysis in seedlings. Reduces lysine acetylation of the glycolytic glyceraldehyde-3-phosphate dehydrogenase (GAPDH), which is found to also function as an activator of glycolytic gene expression. This chain is NAD-dependent protein deacetylase SRT1, found in Oryza sativa subsp. indica (Rice).